A 501-amino-acid chain; its full sequence is Endosomal/lysosomal proton channel TMEM175 (501 aa).

Residues 1 to 20 (MAAPRAATPGPGGGARKPEL) form a disordered region. Residues 1–31 (MAAPRAATPGPGGGARKPELDLELGSSTQTS) lie on the Cytoplasmic side of the membrane. A helical transmembrane segment spans residues 32–54 (HRLLAYSDALLSIIATVMILPVA). The RxxxFSD motif 1 motif lies at 33 to 39 (RLLAYSD). Over 55–75 (HTKIHPDQKLGESVQQLLLTK) the chain is Lumenal. The tract at residues 56–61 (TKIHPD) is short helix H1-1. A short helix H2-1 region spans residues 63 to 69 (KLGESVQ). The helical transmembrane segment at 76-98 (IAVYLMTFLIVTVAWAAHVRLFQ) threads the bilayer. Topologically, residues 99–104 (VIELID) are cytoplasmic. The chain crosses the membrane as a helical span at residues 105–126 (DVLALLNLACMMIITFLPYTFS). The Lumenal segment spans residues 127 to 136 (LMASFPGVPF). The chain crosses the membrane as a helical span at residues 137 to 158 (GIFLFSVCAVVIGLIQAVIVVY). Residues 159–182 (GFYHPHLLNQQIQVSENQNFYKRH) lie on the Cytoplasmic side of the membrane. The helical transmembrane segment at 183 to 203 (ILKIILRGPALCFLAAIFSFF) threads the bilayer. Residues 204–208 (FIPLS) lie on the Lumenal side of the membrane. Residues 209–228 (YLLLGLVIVFPHLSRFITWC) form a helical membrane-spanning segment. Topologically, residues 229-257 (KTKIVGHRDEEEASYSLETFSFYLSEPLS) are cytoplasmic. The helical transmembrane segment at 258–282 (KERVEAFSDGVYAIVATLLILDICE) threads the bilayer. Residues 260 to 266 (RVEAFSD) carry the RxxxFSD motif 2 motif. The Lumenal portion of the chain corresponds to 283–309 (DNVPDPREVGEKFHGSLLEALSEYGPN). Positions 288–296 (PREVGEKFH) are short helix H1-2. The interval 298-304 (SLLEALS) is short helix H2-2. Residues 310–332 (YLAYFGSFVTIGLLWFVHHSLFL) form a helical membrane-spanning segment. The Cytoplasmic segment spans residues 333-338 (YVTKAT). The helical transmembrane segment at 339-360 (RLMGLLNILSLAFIGGLPLAYQ) threads the bilayer. At 361-375 (LTSEFAEKSHNEIEA) the chain is on the lumenal side. A helical transmembrane segment spans residues 376–396 (IQVSCVITFFASIFQFAIWTT). Residues 397 to 416 (ALLHERETLHPFARYGGKEH) are Cytoplasmic-facing. Residues 417-440 (AFMFAKLALYPCVSLGAFFLTCLL) form a helical membrane-spanning segment. Topologically, residues 441–442 (SE) are lumenal. Residues 443-469 (FSTEIFHLMQIVIPFAFLALRIFVRIS) traverse the membrane as a helical segment. Residues 470–501 (LTVIKSVMSLSRRKVVLLEEEEACLSPTETHS) are Cytoplasmic-facing.

This sequence belongs to the TMEM175 family. As to quaternary structure, homodimer.

The protein localises to the endosome membrane. The protein resides in the lysosome membrane. It catalyses the reaction H(+)(in) = H(+)(out). It carries out the reaction K(+)(in) = K(+)(out). Active at low pH (under pH 4.6): proton channel activity is activated by luminal side protons. Polyunsaturated fatty acids, such as arachidonic acid, also activate the channel activity. Functionally, proton-activated proton channel that catalyzes proton efflux from endosomes and lysosomes to maintain a steady-state pH. Activated at low pH (under pH 4.6) by luminal side protons: selectively mediates lysosomal proton release from lysosomes, eliciting a proton leak that balances V-ATPase activity to maintain pH homeostasis. Regulation of lumenal pH stability is required for autophagosome-lysosome fusion. Also acts as a potassium channel at higher pH, regulating potassium conductance in endosomes and lysosomes. The protein is Endosomal/lysosomal proton channel TMEM175 of Gallus gallus (Chicken).